The sequence spans 165 residues: Choriogonadotropin subunit beta 3 (165 aa).

The signal sequence occupies residues 1–20 (MEMFQGLLLLLLLSMGGTWA). Disulfide bonds link C29–C77, C43–C92, C46–C130, C54–C108, C58–C110, and C113–C120. N-linked (GlcNAc...) asparagine glycans are attached at residues N33 and N50. The disordered stretch occupies residues 131-165 (DDPRFQDSSSSKAPPPSLPSPSRLPGPSDTPILPQ). O-linked (GalNAc...) serine glycosylation is found at S141, S147, S152, and S158. The segment covering 143-154 (APPPSLPSPSRL) has biased composition (pro residues).

The protein belongs to the glycoprotein hormones subunit beta family. In terms of assembly, heterodimer of a common alpha chain identical in LH, FSH, TSH and HCG and a unique beta chain distinct in each of the hormones. As to expression, high expression in the placenta throughout pregnancy.

The protein resides in the secreted. Functionally, beta subunit of the human chorionic gonadotropin (hCG). hCG is a complex glycoprotein composed of two glycosylated subunits alpha and beta which are non-covalently associated. The alpha subunit is identical to those in the pituitary gonadotropin hormones (LH, FSH and TSH). The beta subunits are distinct in each of the hormones and confer receptor and biological specificity. Has an essential role in pregnancy and maternal adaptation. Stimulates the ovaries to synthesize the steroids that are essential for the maintenance of pregnancy. The sequence is that of Choriogonadotropin subunit beta 3 (CGB3) from Homo sapiens (Human).